The following is a 217-amino-acid chain: Frataxin, mitochondrial (217 aa).

The N-terminal 42 residues, 1–42 (MWTLGRRSVASFLPRSALPGFAPTRAGAPRPAKDLSLSGLPG), are a transit peptide targeting the mitochondrion.

It belongs to the frataxin family. In terms of assembly, component of the mitochondrial core iron-sulfur cluster (ISC) complex composed of NFS1, LYRM4, NDUFAB1, ISCU, FXN, and FDX2; this complex is a heterohexamer containing two copies of each monomer. Homodimer. Monomer (probable predominant form). Oligomer. Monomers and polymeric aggregates of &gt;1 MDa have been isolated from mitochondria. A small fraction of heterologous overexpressed recombinant frataxin forms high-molecular weight aggregates that incorporate iron. Interacts with LYRM4. Interacts (via ferrous form) with ISCU; the interaction is possible when both are bound to the dimeric form of the cysteine desulfurase complex (NFS1:LYRM4) and the interaction enhances FXN interaction to the dimeric form of the cysteine desulfurase complex (NFS1:LYRM4). Interacts with FECH; one iron-bound FXN monomer seems to interact with a FECH homodimer. Interacts with SDHA and SDHB. Interacts with ACO2; the interaction is dependent on citrate. Interacts with HSPA9. As to quaternary structure, interacts with ACO1. Interacts with ISCU (cytoplasmic form). Post-translationally, processed in two steps by mitochondrial processing peptidase (MPP). MPP first cleaves the precursor to intermediate form and subsequently converts the intermediate to yield frataxin mature form (frataxin(81-210)) which is the predominant form. The additional forms, frataxin(56-210) and frataxin(78-210), seem to be produced when the normal maturation process is impaired; their physiological relevance is unsure.

It is found in the mitochondrion. The protein localises to the cytoplasm. Its subcellular location is the cytosol. The enzyme catalyses 4 Fe(2+) + O2 + 4 H(+) = 4 Fe(3+) + 2 H2O. Functions as an activator of persulfide transfer to the scaffoding protein ISCU as component of the core iron-sulfur cluster (ISC) assembly complex and participates to the [2Fe-2S] cluster assembly. Accelerates sulfur transfer from NFS1 persulfide intermediate to ISCU and to small thiols such as L-cysteine and glutathione leading to persulfuration of these thiols and ultimately sulfide release. Binds ferrous ion and is released from FXN upon the addition of both L-cysteine and reduced FDX2 during [2Fe-2S] cluster assembly. The core iron-sulfur cluster (ISC) assembly complex is involved in the de novo synthesis of a [2Fe-2S] cluster, the first step of the mitochondrial iron-sulfur protein biogenesis. This process is initiated by the cysteine desulfurase complex (NFS1:LYRM4:NDUFAB1) that produces persulfide which is delivered on the scaffold protein ISCU in a FXN-dependent manner. Then this complex is stabilized by FDX2 which provides reducing equivalents to accomplish the [2Fe-2S] cluster assembly. Finally, the [2Fe-2S] cluster is transferred from ISCU to chaperone proteins, including HSCB, HSPA9 and GLRX5. May play a role in the protection against iron-catalyzed oxidative stress through its ability to catalyze the oxidation of Fe(2+) to Fe(3+); the oligomeric form but not the monomeric form has in vitro ferroxidase activity. May be able to store large amounts of iron in the form of a ferrihydrite mineral by oligomerization; however, the physiological relevance is unsure as reports are conflicting and the function has only been shown using heterologous overexpression systems. May function as an iron chaperone protein that protects the aconitase [4Fe-4S]2+ cluster from disassembly and promotes enzyme reactivation. May play a role as a high affinity iron binding partner for FECH that is capable of both delivering iron to ferrochelatase and mediating the terminal step in mitochondrial heme biosynthesis. In terms of biological role, modulates the RNA-binding activity of ACO1. May be involved in the cytoplasmic iron-sulfur protein biogenesis. May contribute to oxidative stress resistance and overall cell survival. In Bos taurus (Bovine), this protein is Frataxin, mitochondrial.